We begin with the raw amino-acid sequence, 478 residues long: Catalase easC (478 aa).

The active site involves H54. Residue Y343 coordinates heme. Positions 459-478 (VAEKARPDSPSRAQPGQLRL) are disordered.

It belongs to the catalase family. Requires heme as cofactor.

It participates in alkaloid biosynthesis; ergot alkaloid biosynthesis. Functionally, catalase; part of the gene cluster that mediates the biosynthesis of fungal ergot alkaloid. DmaW catalyzes the first step of ergot alkaloid biosynthesis by condensing dimethylallyl diphosphate (DMAP) and tryptophan to form 4-dimethylallyl-L-tryptophan. The second step is catalyzed by the methyltransferase easF that methylates 4-dimethylallyl-L-tryptophan in the presence of S-adenosyl-L-methionine, resulting in the formation of 4-dimethylallyl-L-abrine. The catalase easC and the FAD-dependent oxidoreductase easE then transform 4-dimethylallyl-L-abrine to chanoclavine-I which is further oxidized by easD in the presence of NAD(+), resulting in the formation of chanoclavine-I aldehyde. Chanoclavine-I aldehyde is the precursor of ergoamides and ergopeptines in Clavicipitaceae, and clavine-type alcaloids such as fumiclavine in Trichocomaceae. However, the metabolites downstream of chanoclavine-I aldehyde in Arthrodermataceae have not been identified yet. In Trichophyton verrucosum (strain HKI 0517), this protein is Catalase easC.